Here is a 320-residue protein sequence, read N- to C-terminus: Cell division protein FtsQ (320 aa).

The tract at residues 1–24 is disordered; that stretch reads MAQTIKRGGKGVRRATAARSAQRK. Residues 1–52 are Cytoplasmic-facing; it reads MAQTIKRGGKGVRRATAARSAQRKVQTARQQTGSVLDSVLRWLPFSEETLHR. The chain crosses the membrane as a helical span at residues 53–73; sequence ILMTLILAAAAGLVWTVAVMA. Over 74 to 320 the chain is Periplasmic; that stretch reads GIPALVSEQA…RAASAKSDEG (247 aa). Residues 92–160 enclose the POTRA domain; sequence FKVSHLEVRG…DTLVIDIVER (69 aa). Residues 296 to 320 form a disordered region; sequence AAEKRAEEQARAEAKRAASAKSDEG.

This sequence belongs to the FtsQ/DivIB family. FtsQ subfamily.

The protein resides in the cell inner membrane. Functionally, essential cell division protein. In Novosphingobium aromaticivorans (strain ATCC 700278 / DSM 12444 / CCUG 56034 / CIP 105152 / NBRC 16084 / F199), this protein is Cell division protein FtsQ.